Here is a 124-residue protein sequence, read N- to C-terminus: Fluoride-specific ion channel FluC (124 aa).

Helical transmembrane passes span 20–40, 60–80, and 102–122; these read LLSIFMIQVFGSSFPFGTLLV, ISPEIKALIGIGLLGALTTFS, and VLLNVTLCLFMVYLGQQLIFS. Residues G74 and T77 each contribute to the Na(+) site.

It belongs to the fluoride channel Fluc/FEX (TC 1.A.43) family.

It is found in the cell inner membrane. It carries out the reaction fluoride(in) = fluoride(out). With respect to regulation, na(+) is not transported, but it plays an essential structural role and its presence is essential for fluoride channel function. In terms of biological role, fluoride-specific ion channel. Important for reducing fluoride concentration in the cell, thus reducing its toxicity. The polypeptide is Fluoride-specific ion channel FluC (Shewanella frigidimarina (strain NCIMB 400)).